The sequence spans 290 residues: Phosphatidylserine decarboxylase proenzyme (290 aa).

Residues aspartate 96, histidine 153, and serine 257 each act as charge relay system; for autoendoproteolytic cleavage activity in the active site. The active-site Schiff-base intermediate with substrate; via pyruvic acid; for decarboxylase activity is serine 257. Residue serine 257 is modified to Pyruvic acid (Ser); by autocatalysis.

The protein belongs to the phosphatidylserine decarboxylase family. PSD-B subfamily. Prokaryotic type I sub-subfamily. As to quaternary structure, heterodimer of a large membrane-associated beta subunit and a small pyruvoyl-containing alpha subunit. Requires pyruvate as cofactor. Is synthesized initially as an inactive proenzyme. Formation of the active enzyme involves a self-maturation process in which the active site pyruvoyl group is generated from an internal serine residue via an autocatalytic post-translational modification. Two non-identical subunits are generated from the proenzyme in this reaction, and the pyruvate is formed at the N-terminus of the alpha chain, which is derived from the carboxyl end of the proenzyme. The autoendoproteolytic cleavage occurs by a canonical serine protease mechanism, in which the side chain hydroxyl group of the serine supplies its oxygen atom to form the C-terminus of the beta chain, while the remainder of the serine residue undergoes an oxidative deamination to produce ammonia and the pyruvoyl prosthetic group on the alpha chain. During this reaction, the Ser that is part of the protease active site of the proenzyme becomes the pyruvoyl prosthetic group, which constitutes an essential element of the active site of the mature decarboxylase.

Its subcellular location is the cell membrane. It carries out the reaction a 1,2-diacyl-sn-glycero-3-phospho-L-serine + H(+) = a 1,2-diacyl-sn-glycero-3-phosphoethanolamine + CO2. It functions in the pathway phospholipid metabolism; phosphatidylethanolamine biosynthesis; phosphatidylethanolamine from CDP-diacylglycerol: step 2/2. Functionally, catalyzes the formation of phosphatidylethanolamine (PtdEtn) from phosphatidylserine (PtdSer). In Haemophilus influenzae (strain 86-028NP), this protein is Phosphatidylserine decarboxylase proenzyme.